The chain runs to 547 residues: Chaperonin GroEL (547 aa).

ATP is bound by residues 30–33, Lys-51, 87–91, Gly-415, and Asp-495; these read TLGP and DGTTT. The disordered stretch occupies residues 526–547; sequence KKESAGGGGMPGGMGGMGGMDF. The span at 530 to 547 shows a compositional bias: gly residues; it reads AGGGGMPGGMGGMGGMDF.

The protein belongs to the chaperonin (HSP60) family. In terms of assembly, forms a cylinder of 14 subunits composed of two heptameric rings stacked back-to-back. Interacts with the co-chaperonin GroES.

It localises to the cytoplasm. It carries out the reaction ATP + H2O + a folded polypeptide = ADP + phosphate + an unfolded polypeptide.. Functionally, together with its co-chaperonin GroES, plays an essential role in assisting protein folding. The GroEL-GroES system forms a nano-cage that allows encapsulation of the non-native substrate proteins and provides a physical environment optimized to promote and accelerate protein folding. The polypeptide is Chaperonin GroEL (Hyphomonas neptunium (strain ATCC 15444)).